A 359-amino-acid polypeptide reads, in one-letter code: Trans-enoyl reductase mpsG (359 aa).

3 residues coordinate NADP(+): Tyr-212, Leu-259, and Thr-278.

The protein belongs to the zinc-containing alcohol dehydrogenase family. In terms of assembly, monomer.

It functions in the pathway secondary metabolite biosynthesis. Its function is as follows. Trans-enoyl reductase; part of the gene cluster that mediates the biosynthesis of macrophasetins, 3-decalinoyltetramic acids (DTAs) which feature a tetramate (pyrrolidine-2,4-dione) unit connected to a decalin fragment and that have potent bioactivities. The PKS-NRPS mpsA together with its associated enoylreductase partner mpsG incorporate one unit of acetyl-CoA, seven units of malonyl-CoA, and one unit of L-alanine to assemble the linear tetramic acid intermediate corresponding to the backbone of macrophasetins. Without the Diels-Alderase mpsD, the mpsA/G product can undergo the non-enzymatic intramolecular Diels-Alder (IMDA) reaction to generate both macrophasetin A and macrophasetin B. Catalyzed by mpsD, the linear tetramic acid intermediate is thoroughly converted to macrophasetin A via the endo-IMDA reaction in a regioselective and stereoselective manner. Finally, the cytochrome P450 monooxygenase mpsF catalyzes the hydroxylation at C20 to yield the end product macrophasetin C. In Macrophomina phaseolina (strain MS6) (Charcoal rot fungus), this protein is Trans-enoyl reductase mpsG.